Consider the following 345-residue polypeptide: Acetylserotonin O-methyltransferase (345 aa).

S-adenosyl-L-methionine-binding positions include Tyr-147, Trp-164, Asp-210, 235 to 237, and Arg-252; that span reads GDF. The Proton donor/acceptor role is filled by His-255. Substrate-binding residues include Asp-256, Asn-302, and Gln-306.

Belongs to the class I-like SAM-binding methyltransferase superfamily. Cation-independent O-methyltransferase family. Homodimer. In terms of tissue distribution, highly expressed in pineal gland. In the retina, 10- to 100-fold lower expression compared to pineal gland, if any.

It carries out the reaction N-acetylserotonin + S-adenosyl-L-methionine = melatonin + S-adenosyl-L-homocysteine + H(+). Its pathway is aromatic compound metabolism; melatonin biosynthesis; melatonin from serotonin: step 1/2. Functionally, catalyzes the transfer of a methyl group onto N-acetylserotonin, producing melatonin (N-acetyl-5-methoxytryptamine). The chain is Acetylserotonin O-methyltransferase (ASMT) from Macaca mulatta (Rhesus macaque).